A 126-amino-acid chain; its full sequence is Small ribosomal subunit protein uS12 (126 aa).

The tract at residues 1–26 is disordered; that stretch reads MPTINQLVRKGRASETTKSKSPALQD. A 3-methylthioaspartic acid modification is found at D89. The tract at residues 103–126 is disordered; it reads DTQGVKDRKQARSKYGAKRAKAGK. Residues 113 to 126 show a composition bias toward basic residues; that stretch reads ARSKYGAKRAKAGK.

It belongs to the universal ribosomal protein uS12 family. As to quaternary structure, part of the 30S ribosomal subunit. Contacts proteins S8 and S17. May interact with IF1 in the 30S initiation complex.

Functionally, with S4 and S5 plays an important role in translational accuracy. Interacts with and stabilizes bases of the 16S rRNA that are involved in tRNA selection in the A site and with the mRNA backbone. Located at the interface of the 30S and 50S subunits, it traverses the body of the 30S subunit contacting proteins on the other side and probably holding the rRNA structure together. The combined cluster of proteins S8, S12 and S17 appears to hold together the shoulder and platform of the 30S subunit. The polypeptide is Small ribosomal subunit protein uS12 (Paraburkholderia xenovorans (strain LB400)).